The sequence spans 244 residues: Cobalt transport protein CbiM (244 aa).

The first 28 residues, 1 to 28, serve as a signal peptide directing secretion; that stretch reads MKKLWKFIPFVLMGVIYFTLTNPESAHA. 6 consecutive transmembrane segments (helical) span residues 37 to 57, 71 to 91, 103 to 123, 135 to 155, 166 to 186, and 206 to 226; these read PVKW…LGLI, LLLA…IPSV, LATV…VLLF, TLGA…FVVY, SVSI…TTSV, and FMAI…LLTV.

The protein belongs to the CbiM family. As to quaternary structure, forms an energy-coupling factor (ECF) transporter complex composed of an ATP-binding protein (A component, CbiO), a transmembrane protein (T component, CbiQ) and 2 possible substrate-capture proteins (S components, CbiM and CbiN) of unknown stoichimetry.

It is found in the cell membrane. It functions in the pathway cofactor biosynthesis; adenosylcobalamin biosynthesis. Its function is as follows. Part of the energy-coupling factor (ECF) transporter complex CbiMNOQ involved in cobalt import. This is Cobalt transport protein CbiM from Listeria seeligeri serovar 1/2b (strain ATCC 35967 / DSM 20751 / CCM 3970 / CCUG 15530 / CIP 100100 / LMG 11386 / NCTC 11856 / SLCC 3954 / 1120).